A 448-amino-acid polypeptide reads, in one-letter code: 5-hydroxytryptamine receptor 7 (448 aa).

Residues 1–86 (MMDVNSSGRP…INYGRVEKVV (86 aa)) lie on the Extracellular side of the membrane. Asn-5 and Asn-69 each carry an N-linked (GlcNAc...) asparagine glycan. The chain crosses the membrane as a helical span at residues 87–111 (IGSILTLITLLTIAGNCLVVISVCF). Over 112–121 (VKKLRQPSNY) the chain is Cytoplasmic. The chain crosses the membrane as a helical span at residues 122-143 (LIVSLALADLSVAVAVMPFVSV). Topologically, residues 144-155 (TDLIGGKWIFGH) are extracellular. A helical membrane pass occupies residues 156-181 (FFCNVFIAMDVMCCTASIMTLCVISI). A disulfide bridge connects residues Cys-158 and Cys-234. Asp-165 is a binding site for serotonin. Over 182 to 201 (DRYLGITRPLTYPVRQNGKC) the chain is Cytoplasmic. The chain crosses the membrane as a helical span at residues 202–222 (MAKMILSVWLLSASITLPPLF). The Extracellular portion of the chain corresponds to 223–240 (GWAQNVNDDKVCLISQDF). The helical transmembrane segment at 241–263 (GYTIYSTAVAFYIPMSVMLFMYY) threads the bilayer. The Cytoplasmic segment spans residues 264 to 329 (QIYKAARKSA…SIFKREQKAA (66 aa)). A helical membrane pass occupies residues 330 to 355 (TTLGIIVGAFTVCWLPFFLLSTARPF). The Extracellular segment spans residues 356–366 (ICGTSCSCIPL). A helical membrane pass occupies residues 367 to 390 (WVERTCLWLGYANSLINPFIYAFF). Topologically, residues 391-448 (NRDLRTTYRSLLQCQYRNINRKLSAAGMHEALKLAERPERSEFVLQNCDHCGKKGHDT) are cytoplasmic. The S-palmitoyl cysteine moiety is linked to residue Cys-404.

This sequence belongs to the G-protein coupled receptor 1 family.

It is found in the cell membrane. Its function is as follows. G-protein coupled receptor for 5-hydroxytryptamine (serotonin), a biogenic hormone that functions as a neurotransmitter, a hormone and a mitogen. Ligand binding causes a conformation change that triggers signaling via guanine nucleotide-binding proteins (G proteins) and modulates the activity of downstream effectors. HTR7 is coupled to G(s) G alpha proteins and mediates activation of adenylate cyclase activity. The sequence is that of 5-hydroxytryptamine receptor 7 (Htr7) from Mus musculus (Mouse).